A 364-amino-acid chain; its full sequence is Histidinol-phosphate aminotransferase (364 aa).

The residue at position 226 (lysine 226) is an N6-(pyridoxal phosphate)lysine.

It belongs to the class-II pyridoxal-phosphate-dependent aminotransferase family. Histidinol-phosphate aminotransferase subfamily. In terms of assembly, homodimer. It depends on pyridoxal 5'-phosphate as a cofactor.

The catalysed reaction is L-histidinol phosphate + 2-oxoglutarate = 3-(imidazol-4-yl)-2-oxopropyl phosphate + L-glutamate. It participates in amino-acid biosynthesis; L-histidine biosynthesis; L-histidine from 5-phospho-alpha-D-ribose 1-diphosphate: step 7/9. This Sulfurimonas denitrificans (strain ATCC 33889 / DSM 1251) (Thiomicrospira denitrificans (strain ATCC 33889 / DSM 1251)) protein is Histidinol-phosphate aminotransferase.